The primary structure comprises 112 residues: Large ribosomal subunit protein P2-B (112 aa).

The interval 89–112 (APAAADAKKEEEEEDDDMGFGLFD) is disordered.

Belongs to the eukaryotic ribosomal protein P1/P2 family. In terms of assembly, P1 and P2 exist as dimers at the large ribosomal subunit. Post-translationally, phosphorylated.

Its function is as follows. Plays an important role in the elongation step of protein synthesis. The polypeptide is Large ribosomal subunit protein P2-B (Trypanosoma cruzi).